Reading from the N-terminus, the 101-residue chain is DNA-binding protein Fis (101 aa).

A DNA-binding region (H-T-H motif) is located at residues 77-96 (QTRAANMLGINRGTLRKKLK).

It belongs to the transcriptional regulatory Fis family. In terms of assembly, homodimer.

Its function is as follows. Activates ribosomal RNA transcription. Plays a direct role in upstream activation of rRNA promoters. This is DNA-binding protein Fis from Shewanella baltica (strain OS223).